The sequence spans 216 residues: GTP cyclohydrolase 1 (216 aa).

Residues C108, H111, and C179 each contribute to the Zn(2+) site.

Belongs to the GTP cyclohydrolase I family. Toroid-shaped homodecamer, composed of two pentamers of five dimers.

It catalyses the reaction GTP + H2O = 7,8-dihydroneopterin 3'-triphosphate + formate + H(+). It participates in cofactor biosynthesis; 7,8-dihydroneopterin triphosphate biosynthesis; 7,8-dihydroneopterin triphosphate from GTP: step 1/1. The chain is GTP cyclohydrolase 1 from Shewanella amazonensis (strain ATCC BAA-1098 / SB2B).